The chain runs to 198 residues: Ribosome maturation factor RimM (198 aa).

Residues 1–21 (MPPPTASTPDDSADPGPDFAD) are disordered. Residues 122–195 (DDELFADDLV…RIVVRPIDGL (74 aa)) form the PRC barrel domain.

The protein belongs to the RimM family. In terms of assembly, binds ribosomal protein uS19.

It localises to the cytoplasm. Functionally, an accessory protein needed during the final step in the assembly of 30S ribosomal subunit, possibly for assembly of the head region. Essential for efficient processing of 16S rRNA. May be needed both before and after RbfA during the maturation of 16S rRNA. It has affinity for free ribosomal 30S subunits but not for 70S ribosomes. This chain is Ribosome maturation factor RimM, found in Salinibacter ruber (strain DSM 13855 / M31).